The sequence spans 146 residues: Hemoglobin subunit beta (146 aa).

Residue valine 1 is modified to N-acetylvaline. Residues 2–146 (HLSGEEKACV…VANALAHKYH (145 aa)) form the Globin domain. Residue threonine 12 is modified to Phosphothreonine. Residue serine 44 is modified to Phosphoserine. The residue at position 59 (lysine 59) is an N6-acetyllysine. Histidine 63 contributes to the heme b binding site. Lysine 82 carries the post-translational modification N6-acetyllysine. Residue histidine 92 participates in heme b binding. Residue cysteine 93 is modified to S-nitrosocysteine. N6-acetyllysine is present on lysine 144.

Belongs to the globin family. As to quaternary structure, heterotetramer of two alpha chains and two beta chains. In terms of tissue distribution, red blood cells.

Its function is as follows. Involved in oxygen transport from the lung to the various peripheral tissues. The protein is Hemoglobin subunit beta (HBB) of Suncus murinus (Asian house shrew).